A 146-amino-acid chain; its full sequence is Hemoglobin subunit beta (146 aa).

Position 1 is an N-acetylvaline (valine 1). The 145-residue stretch at 2–146 folds into the Globin domain; sequence HLTAEEKSLV…VANALAHKYH (145 aa). The residue at position 44 (serine 44) is a Phosphoserine. Lysine 59 carries the post-translational modification N6-acetyllysine. Histidine 63 serves as a coordination point for heme b. Lysine 82 bears the N6-acetyllysine mark. Histidine 92 is a heme b binding site. Cysteine 93 carries the post-translational modification S-nitrosocysteine. At lysine 144 the chain carries N6-acetyllysine.

The protein belongs to the globin family. As to quaternary structure, heterotetramer of two alpha chains and two beta chains. As to expression, red blood cells.

Functionally, involved in oxygen transport from the lung to the various peripheral tissues. In Canis latrans (Coyote), this protein is Hemoglobin subunit beta (HBB).